A 310-amino-acid chain; its full sequence is Tagatose-6-phosphate kinase (310 aa).

This sequence belongs to the carbohydrate kinase PfkB family. LacC subfamily.

The catalysed reaction is D-tagatofuranose 6-phosphate + ATP = D-tagatofuranose 1,6-bisphosphate + ADP + H(+). Its pathway is carbohydrate metabolism; D-tagatose 6-phosphate degradation; D-glyceraldehyde 3-phosphate and glycerone phosphate from D-tagatose 6-phosphate: step 1/2. In Staphylococcus aureus (strain bovine RF122 / ET3-1), this protein is Tagatose-6-phosphate kinase.